The primary structure comprises 331 residues: Protein RecA (331 aa).

An ATP-binding site is contributed by 66–73 (GPESSGKT).

Belongs to the RecA family.

Its subcellular location is the cytoplasm. Its function is as follows. Can catalyze the hydrolysis of ATP in the presence of single-stranded DNA, the ATP-dependent uptake of single-stranded DNA by duplex DNA, and the ATP-dependent hybridization of homologous single-stranded DNAs. It interacts with LexA causing its activation and leading to its autocatalytic cleavage. This Acholeplasma laidlawii protein is Protein RecA.